The chain runs to 328 residues: Malate dehydrogenase (328 aa).

Position 12-18 (12-18 (GAAGQIG)) interacts with NAD(+). Arg-95 and Arg-101 together coordinate substrate. NAD(+) contacts are provided by residues Asn-108, Gln-115, and 132-134 (VGN). Substrate contacts are provided by Asn-134 and Arg-165. The active-site Proton acceptor is the His-190.

This sequence belongs to the LDH/MDH superfamily. MDH type 2 family.

It carries out the reaction (S)-malate + NAD(+) = oxaloacetate + NADH + H(+). Catalyzes the reversible oxidation of malate to oxaloacetate. The sequence is that of Malate dehydrogenase from Methylibium petroleiphilum (strain ATCC BAA-1232 / LMG 22953 / PM1).